Reading from the N-terminus, the 1020-residue chain is MKGKNVQLLFALVVIILLFPTGASASPHAVSVGKGSYATEFPEIDFGGINDPGFRDQQGEPPATIYRSDRVTGPMQTNSWWGSLAVDRFSMNQYPHPFSVRHRAEGLHVFYDAPHNMVVHENREAGTWHIHGAIGTDFTIKHSGTANFEQAVVDDYNDWYVRGLLENGAHQMAITYGVGSPYIFVEYEDGSAVLDFDIAPDVWEMNGHVIGFSTHDHKHYAAFAPPGQNWSGIGSKTLTNNADYIAIAKLPEKDGNMLAKFEQYAYSVVRDAVADWTYDEATGTVTTTFEVTTEAKVQGAPDGTIFALYPHQYRHLASSSENQLLQNYQYEIIRGTMIGLEGKRFTTELTYPGVLPSLPDLGDYDRERLIGYLHDATSDYPTGSDTYELGKYIGKLATLAPIADQMGEYELAEQFRGELKDILEDWLQATNASGQLKGKNLFYYNENWGTILGYHAAHSSATRINDHHFHYGYFVKAAAEIARADQEWAKSENWGGMIDLLIRDFMADRDDDLFPYLRMFDPYSGNSWADGLATFDAGNNQESSSEAMHAWTNVILWAEATGNKALRDRAIYLYTTEMSAINEYFFDVHQEIFPEEYGPEIVTINWGGKMDHATWWNSGKVEKYAINWLPFHGGSLYLGHHPDYVDRAYEELRRDIGSTDWNLWSNLVWMYRAFTNPDDALQQMEASIDDYGLFDPGNEKIIERGSTKAQTYHWIHNLAELGRVDPTVTANHPIYAVFNKNGNRTYIVYNFSDSPITVQFSDGHSIQVEPHSFNIGNGDGPTNPDPSEPDLKNPYERIQAEAYDAMSGIQTEGTDDDGGGDNIGWINDGDWVKYERVHFERDASSIEVRVASDTPGGRIEIRTGSPTGTLLGDVQVPNTGGWQQWQTVTGNVQIQPGTYDVYLVFKGSPEYDLMNVNWFVFRANGQGNGDSHTHPDYTAGIRGITGNEVTIFFAPTTEARYVDVHLKVNNGQQLNYRMTERNGEWERVVENLSSGDVLEYSFTYEKLGPQYTTEWFTYSR.

An N-terminal signal peptide occupies residues 1-25 (MKGKNVQLLFALVVIILLFPTGASA). The tract at residues 28-251 (HAVSVGKGSY…ADYIAIAKLP (224 aa)) is beta-sandwich subdomain. Positions 28–722 (HAVSVGKGSY…HWIHNLAELG (695 aa)) constitute a GH81 domain. Residues 252 to 350 (EKDGNMLAKF…EGKRFTTELT (99 aa)) form an alpha/beta subdomain region. Residues 360–722 (DLGDYDRERL…HWIHNLAELG (363 aa)) are (alpha/beta)6 barrel subdomain. (1,3-beta-D-glucosyl)n-binding residues include tyrosine 387, lysine 391, histidine 458, aspartate 466, histidine 470, aspartate 530, asparagine 540, glutamate 542, glutamate 546, glutamate 699, and arginine 704. The active site involves aspartate 466. Catalysis depends on residues glutamate 542 and glutamate 546. The tract at residues 771-790 (HSFNIGNGDGPTNPDPSEPD) is disordered. One can recognise a CBM6 domain in the interval 796–922 (ERIQAEAYDA…LMNVNWFVFR (127 aa)). (1,3-beta-D-glucosyl)n contacts are provided by glutamate 812, tryptophan 825, aspartate 853, asparagine 878, aspartate 912, and asparagine 915. In terms of domain architecture, CBM56 spans 928-1020 (NGDSHTHPDY…YTTEWFTYSR (93 aa)).

This sequence belongs to the glycosyl hydrolase 81 family.

The protein localises to the secreted. It catalyses the reaction Hydrolysis of (1-&gt;3)-beta-D-glucosidic linkages in (1-&gt;3)-beta-D-glucans.. Functionally, cleaves internal linkages in 1,3-beta-glucan. May contribute to plant biomass degradation. This is Glucan endo-1,3-beta-D-glucosidase from Halalkalibacterium halodurans (strain ATCC BAA-125 / DSM 18197 / FERM 7344 / JCM 9153 / C-125) (Bacillus halodurans).